A 117-amino-acid chain; its full sequence is Big defensin (117 aa).

The first 23 residues, 1–23, serve as a signal peptide directing secretion; sequence MKGNIGIAVFYMLLLLLPTDSIG. The propeptide occupies 26-36; sequence MEEEQEKLFRQ. 3 cysteine pairs are disulfide-bonded: Cys-83/Cys-113, Cys-90/Cys-108, and Cys-94/Cys-114.

Belongs to the big defensin family. As to quaternary structure, interacts with intracellular coagulation inhibitor 1/LICI-1. Expressed in all tissues examined, including hemocytes, heart, hepatopancreas, stomach, intestine and skeletal muscle.

Its subcellular location is the secreted. In terms of biological role, significantly inhibits the growth of Gram-negative and Gram-positive bacteria and fungi in vitro. In Tachypleus tridentatus (Japanese horseshoe crab), this protein is Big defensin.